Consider the following 342-residue polypeptide: S-adenosylmethionine:tRNA ribosyltransferase-isomerase (342 aa).

The protein belongs to the QueA family. In terms of assembly, monomer.

The protein resides in the cytoplasm. It catalyses the reaction 7-aminomethyl-7-carbaguanosine(34) in tRNA + S-adenosyl-L-methionine = epoxyqueuosine(34) in tRNA + adenine + L-methionine + 2 H(+). The protein operates within tRNA modification; tRNA-queuosine biosynthesis. In terms of biological role, transfers and isomerizes the ribose moiety from AdoMet to the 7-aminomethyl group of 7-deazaguanine (preQ1-tRNA) to give epoxyqueuosine (oQ-tRNA). This is S-adenosylmethionine:tRNA ribosyltransferase-isomerase from Sulfurimonas denitrificans (strain ATCC 33889 / DSM 1251) (Thiomicrospira denitrificans (strain ATCC 33889 / DSM 1251)).